Reading from the N-terminus, the 201-residue chain is Lipopolysaccharide core heptose(II)-phosphate phosphatase (201 aa).

Positions 1 to 35 are cleaved as a signal peptide; it reads MLAFTLRFIKNKRYLATLAGALVIIAGLTSQHAWS.

The protein belongs to the phosphoglycerate mutase family. Ais subfamily.

The protein localises to the periplasm. It functions in the pathway bacterial outer membrane biogenesis; lipopolysaccharide metabolism. In terms of biological role, catalyzes the dephosphorylation of heptose(II) of the outer membrane lipopolysaccharide core. This is Lipopolysaccharide core heptose(II)-phosphate phosphatase from Salmonella schwarzengrund (strain CVM19633).